The primary structure comprises 2958 residues: Protein CSF1 (2958 aa).

Residues 1–17 lie on the Cytoplasmic side of the membrane; it reads MEAISQLRGVPLTHQKD. A helical; Signal-anchor for type II membrane protein membrane pass occupies residues 18–38; sequence FSWVFLVDWILTVVVCLTMIF. Topologically, residues 39-2958 are extracellular; that stretch reads YMGRIYAYLV…QYVKILDDTH (2920 aa). N-linked (GlcNAc...) asparagine glycans are attached at residues Asn82, Asn117, Asn144, Asn271, Asn478, Asn530, Asn816, Asn821, Asn839, and Asn892. The segment at 813–834 is disordered; the sequence is GYQNSSLKNESEDKGPMKRSDL. Positions 821–834 are enriched in basic and acidic residues; that stretch reads NESEDKGPMKRSDL. The segment at 1175-1196 is disordered; sequence MEPSRASFSEDDNDEEADPSSF. Positions 1183 to 1192 are enriched in acidic residues; the sequence is SEDDNDEEAD. Residues Asn1309, Asn1368, Asn1453, Asn1785, Asn1921, Asn2130, Asn2146, Asn2280, Asn2337, Asn2520, Asn2578, Asn2719, and Asn2869 are each glycosylated (N-linked (GlcNAc...) asparagine).

It belongs to the CSF1 family. As to quaternary structure, interacts with MCD4; CSF1 channels phosphatidylethanolamine to MCD4 in the endoplasmic reticulum at contact sites to support GPI anchor biosynthesis.

Its subcellular location is the cell membrane. It is found in the endoplasmic reticulum membrane. The protein resides in the mitochondrion membrane. Its function is as follows. Tube-forming lipid transport protein which provides phosphatidylethanolamine for glycosylphosphatidylinositol (GPI) anchor synthesis in the endoplasmic reticulum. Required for the glucose and other nutrients uptake at low temperature. The chain is Protein CSF1 from Saccharomyces cerevisiae (strain ATCC 204508 / S288c) (Baker's yeast).